The sequence spans 644 residues: uncharacterized protein (644 aa).

Positions 1-35 (MKANGLDNDPARTGMERTDIDSEHPEAQPLLNNNH) are disordered. Over 1-90 (MKANGLDNDP…ILNILILINT (90 aa)) the chain is Cytoplasmic. Over residues 14-26 (GMERTDIDSEHPE) the composition is skewed to basic and acidic residues. Phosphoserine is present on residues Ser22, Ser56, and Ser63. The helical transmembrane segment at 91–111 (IWLVTTLISDFFFNINILFGF) threads the bilayer. Residues 112–122 (SNRYASFNDLT) lie on the Vacuolar side of the membrane. A helical membrane pass occupies residues 123–143 (LIFISIIANSFNLWFNKLGLY). The Cytoplasmic portion of the chain corresponds to 144–147 (SALD). The helical transmembrane segment at 148 to 168 (YSLNVTLCVLTLFNLALTYLI) threads the bilayer. Over 169 to 174 (KYTRQR) the chain is Vacuolar. A helical transmembrane segment spans residues 175–195 (IGFVGTFTYLWTSFSFFIGAI). At 196–271 (LDWYLLFYNN…EWVSIGFRNT (76 aa)) the chain is on the cytoplasmic side. The interval 225 to 251 (NENHTNSTENRDRSQYGSGSPTPTHRS) is disordered. The segment covering 239–251 (QYGSGSPTPTHRS) has biased composition (polar residues). Ser244 carries the phosphoserine modification. The helical transmembrane segment at 272–292 (IKFLILIFFALFTLNTLLTTL) threads the bilayer. The Vacuolar segment spans residues 293-644 (DTYRLTHKLP…IGELGKLTED (352 aa)). Residues 348–619 (PIILFEHGGY…IVEGGHEIYK (272 aa)) form the AB hydrolase-1 domain. Residues 469-492 (GRGDGDDGDDGNGNDGDGRNHDKT) are disordered.

The protein resides in the vacuole membrane. This is an uncharacterized protein from Saccharomyces cerevisiae (strain ATCC 204508 / S288c) (Baker's yeast).